A 206-amino-acid chain; its full sequence is MHNDFNLLILSGPSGAGKSTLTKYLQEKIPKTHFSLSTTTRKPREGEVDGLHYNFVSEEEFKQGIEKGQFLEWAIVHNHYYGTSKIPVEKALKEGKIVIFDIDVQGHEILKKHYPNACSVFISTKNQEILKERLLLRGTDSKETIEKRLINAYKEMQCLESFDYLIINEDLEKSKEIILSIAKTLVHRLKAFNFEKICKAWKNETL.

The Guanylate kinase-like domain occupies 5–183 (FNLLILSGPS…SKEIILSIAK (179 aa)). 12–19 (GPSGAGKS) contributes to the ATP binding site.

It belongs to the guanylate kinase family.

Its subcellular location is the cytoplasm. The enzyme catalyses GMP + ATP = GDP + ADP. Its function is as follows. Essential for recycling GMP and indirectly, cGMP. The sequence is that of Guanylate kinase (gmk) from Helicobacter pylori (strain ATCC 700392 / 26695) (Campylobacter pylori).